We begin with the raw amino-acid sequence, 267 residues long: Stage 0 sporulation protein A (267 aa).

One can recognise a Response regulatory domain in the interval 5–123 (KVCVADDNRE…NLVGHIRQVS (119 aa)). Residues D10, D11, and D56 each contribute to the Ca(2+) site. 4-aspartylphosphate is present on D56. Residues 126–150 (ASSVTHRAPSSQSSIIRSSQPEPKK) are disordered. A compositionally biased stretch (low complexity) spans 135–145 (SSQSSIIRSSQ). The H-T-H motif DNA-binding region spans 199–218 (PDIAKKFNTTASRVERAIRH).

In terms of assembly, interacts with small protein YqaH, which is encoded in the skin prophage-like element. It depends on Ca(2+) as a cofactor. Phosphorylated by KinA and KinB.

The protein resides in the cytoplasm. May play the central regulatory role in sporulation. It may be an element of the effector pathway responsible for the activation of sporulation genes in response to nutritional stress. Spo0A may act in concert with Spo0H (a sigma factor) to control the expression of some genes that are critical to the sporulation process. Repressor of abrB, activator of the spoIIa operon. Binds the DNA sequence 5'-TGNCGAA-3' (0A box). The protein is Stage 0 sporulation protein A (spo0A) of Bacillus subtilis (strain 168).